A 430-amino-acid polypeptide reads, in one-letter code: UDP-N-acetylglucosamine 1-carboxyvinyltransferase (430 aa).

22-23 (KN) lines the phosphoenolpyruvate pocket. Position 102 (Arg102) interacts with UDP-N-acetyl-alpha-D-glucosamine. Cys126 serves as the catalytic Proton donor. Position 126 is a 2-(S-cysteinyl)pyruvic acid O-phosphothioketal (Cys126). UDP-N-acetyl-alpha-D-glucosamine contacts are provided by residues 131 to 135 (RPVDL), 172 to 175 (KVSV), Asp317, and Ile339.

This sequence belongs to the EPSP synthase family. MurA subfamily.

It localises to the cytoplasm. The catalysed reaction is phosphoenolpyruvate + UDP-N-acetyl-alpha-D-glucosamine = UDP-N-acetyl-3-O-(1-carboxyvinyl)-alpha-D-glucosamine + phosphate. It functions in the pathway cell wall biogenesis; peptidoglycan biosynthesis. Cell wall formation. Adds enolpyruvyl to UDP-N-acetylglucosamine. The polypeptide is UDP-N-acetylglucosamine 1-carboxyvinyltransferase (Rhizobium leguminosarum bv. trifolii (strain WSM2304)).